Here is a 580-residue protein sequence, read N- to C-terminus: Protein O-linked-mannose beta-1,4-N-acetylglucosaminyltransferase 2 (580 aa).

The Cytoplasmic segment spans residues Met1–Ser4. Residues Ala5–Leu25 traverse the membrane as a helical; Signal-anchor for type II membrane protein segment. The Lumenal segment spans residues Arg26–Thr580. N-linked (GlcNAc...) asparagine glycans are attached at residues Asn99 and Asn276. A Fibronectin type-III domain is found at Ala488–Thr580.

The protein belongs to the glycosyltransferase 61 family.

The protein localises to the endoplasmic reticulum membrane. The catalysed reaction is 3-O-(alpha-D-mannosyl)-L-threonyl-[protein] + UDP-N-acetyl-alpha-D-glucosamine = 3-O-(N-acetyl-beta-D-glucosaminyl-(1-&gt;4)-alpha-D-mannosyl)-L-threonyl-[protein] + UDP + H(+). Its pathway is protein modification; protein glycosylation. In terms of biological role, O-linked mannose beta-1,4-N-acetylglucosaminyltransferase that transfers UDP-N-acetyl-D-glucosamine to the 4-position of the mannose to generate N-acetyl-D-glucosamine-beta-1,4-O-D-mannosylprotein. Involved in the biosynthesis of the phosphorylated O-mannosyl trisaccharide (N-acetylgalactosamine-beta-3-N-acetylglucosamine-beta-4-(phosphate-6-)mannose), a carbohydrate structure present in alpha-dystroglycan (DAG1), which is required for binding laminin G-like domain-containing extracellular proteins with high affinity. This chain is Protein O-linked-mannose beta-1,4-N-acetylglucosaminyltransferase 2 (POMGNT2), found in Bos taurus (Bovine).